Consider the following 398-residue polypeptide: Meiotically up-regulated gene 126 protein (398 aa).

Disordered stretches follow at residues 30–81 (EEME…QRHR) and 119–260 (FESD…NSNS). 2 stretches are compositionally biased toward polar residues: residues 119 to 135 (FESD…NFPT) and 183 to 199 (VQEN…QEPQ). A compositionally biased stretch (low complexity) spans 210 to 222 (QANQQETSSNQEE). The segment covering 224-236 (SFDRQETQDDKQK) has biased composition (basic and acidic residues). Over residues 248–260 (RNRNQATITNSNS) the composition is skewed to polar residues. Helical transmembrane passes span 269 to 289 (IFVI…DLIE), 305 to 325 (IFLW…YLAL), 341 to 361 (GACF…CFLI), and 373 to 393 (LEIY…GAIY).

Its subcellular location is the membrane. In terms of biological role, has a role in meiosis. This Schizosaccharomyces pombe (strain 972 / ATCC 24843) (Fission yeast) protein is Meiotically up-regulated gene 126 protein (mug126).